Reading from the N-terminus, the 323-residue chain is Elongation factor P--(R)-beta-lysine ligase (323 aa).

74–76 (SPE) lines the substrate pocket. ATP-binding positions include 98–100 (RNE) and Asn107. Substrate is bound at residue Tyr116. 242-243 (EL) is an ATP binding site. Glu249 contacts substrate. Residue Gly298 participates in ATP binding.

This sequence belongs to the class-II aminoacyl-tRNA synthetase family. EpmA subfamily. Homodimer.

The catalysed reaction is D-beta-lysine + L-lysyl-[protein] + ATP = N(6)-((3R)-3,6-diaminohexanoyl)-L-lysyl-[protein] + AMP + diphosphate + H(+). In terms of biological role, with EpmB is involved in the beta-lysylation step of the post-translational modification of translation elongation factor P (EF-P). Catalyzes the ATP-dependent activation of (R)-beta-lysine produced by EpmB, forming a lysyl-adenylate, from which the beta-lysyl moiety is then transferred to the epsilon-amino group of a conserved specific lysine residue in EF-P. This chain is Elongation factor P--(R)-beta-lysine ligase, found in Vibrio parahaemolyticus serotype O3:K6 (strain RIMD 2210633).